Reading from the N-terminus, the 286-residue chain is Undecaprenyl-diphosphatase (286 aa).

The next 7 helical transmembrane spans lie at 50 to 70, 97 to 117, 126 to 146, 156 to 176, 200 to 220, 236 to 256, and 264 to 284; these read GAAF…VYFW, MGWL…IFQD, LWIV…ADAV, LTYK…IPGV, SFLL…YKVM, LATL…LKFV, and FVWY…FNVI.

This sequence belongs to the UppP family.

The protein localises to the cell membrane. The enzyme catalyses di-trans,octa-cis-undecaprenyl diphosphate + H2O = di-trans,octa-cis-undecaprenyl phosphate + phosphate + H(+). In terms of biological role, catalyzes the dephosphorylation of undecaprenyl diphosphate (UPP). Confers resistance to bacitracin. The chain is Undecaprenyl-diphosphatase from Arthrobacter sp. (strain FB24).